The chain runs to 231 residues: Insertion sequence IS1162 putative ATP-binding protein (231 aa).

107-114 contacts ATP; sequence GPTGVGKT.

Belongs to the IS21/IS1162 putative ATP-binding protein family.

The polypeptide is Insertion sequence IS1162 putative ATP-binding protein (Pseudomonas fluorescens).